Reading from the N-terminus, the 214-residue chain is Cdc42 effector protein 2 (214 aa).

N-acetylserine is present on serine 2. The 15-residue stretch at 30–44 (ISPPLGDFRHTIHIG) folds into the CRIB domain. Residues serine 31, serine 101, serine 137, serine 141, and serine 145 each carry the phosphoserine modification. The interval 118 to 151 (ALTLPTTQAPPKPPRLHLESPQPSPKSSPQEAGN) is disordered.

This sequence belongs to the BORG/CEP family. As to quaternary structure, interacts with CDC42 and RHOQ, in a GTP-dependent manner, and with SEPT7.

It localises to the endomembrane system. Its subcellular location is the cytoplasm. It is found in the cytoskeleton. Its function is as follows. Probably involved in the organization of the actin cytoskeleton. May act downstream of CDC42 to induce actin filament assembly leading to cell shape changes. Induces pseudopodia formation in fibroblasts in a CDC42-dependent manner. This chain is Cdc42 effector protein 2 (Cdc42ep2), found in Rattus norvegicus (Rat).